The primary structure comprises 277 residues: MVIRSYRAYTLGTRNRSVFEFEKKVRSKPQKKLTFRQHCKKGRNNRGIITSRHRGGGHKRIYRKIDFLRDKKDIFGRIATIEYDPNRNTFICLTYYEDGEKKYILYPQGMRIGDSVVSSTEAPISIGNALPLTNMPLGTAIHNVEITPGKGGQLARAAGAVAKIIAKEGRLATLRLPSGEVRLISQKCLATIGQVGNSDANNRTIGKAGSKRWLGKRPKVRGVVMNPIDHPHGGGEGRAPIGRKKPLTPWGHPALGRKTRRNKKYSDILIVRRRKNN.

The segment at 224–257 (VMNPIDHPHGGGEGRAPIGRKKPLTPWGHPALGR) is disordered.

It belongs to the universal ribosomal protein uL2 family. In terms of assembly, part of the 50S ribosomal subunit.

It localises to the plastid. The protein localises to the chloroplast. The sequence is that of Large ribosomal subunit protein uL2c (rpl2) from Anthoceros angustus (Hornwort).